A 354-amino-acid polypeptide reads, in one-letter code: Nicotinate-nucleotide--dimethylbenzimidazole phosphoribosyltransferase (354 aa).

Glu-319 acts as the Proton acceptor in catalysis.

Belongs to the CobT family.

The enzyme catalyses 5,6-dimethylbenzimidazole + nicotinate beta-D-ribonucleotide = alpha-ribazole 5'-phosphate + nicotinate + H(+). It functions in the pathway nucleoside biosynthesis; alpha-ribazole biosynthesis; alpha-ribazole from 5,6-dimethylbenzimidazole: step 1/2. Catalyzes the synthesis of alpha-ribazole-5'-phosphate from nicotinate mononucleotide (NAMN) and 5,6-dimethylbenzimidazole (DMB). This is Nicotinate-nucleotide--dimethylbenzimidazole phosphoribosyltransferase from Chlorobium chlorochromatii (strain CaD3).